A 365-amino-acid chain; its full sequence is Dihydroorotate dehydrogenase (quinone) (365 aa).

Residues 61 to 65 (AGFDK) and Ser-85 contribute to the FMN site. Lys-65 contacts substrate. Residue 110–114 (NRMGF) participates in substrate binding. The FMN site is built by Asn-139 and Asn-170. Asn-170 serves as a coordination point for substrate. The Nucleophile role is filled by Ser-173. Substrate is bound at residue Asn-175. FMN-binding residues include Lys-214 and Ser-242. 243–244 (NT) lines the substrate pocket. FMN contacts are provided by residues Gly-266, Gly-295, and 316–317 (YS).

It belongs to the dihydroorotate dehydrogenase family. Type 2 subfamily. In terms of assembly, monomer. FMN is required as a cofactor.

The protein localises to the cell membrane. It catalyses the reaction (S)-dihydroorotate + a quinone = orotate + a quinol. It functions in the pathway pyrimidine metabolism; UMP biosynthesis via de novo pathway; orotate from (S)-dihydroorotate (quinone route): step 1/1. Functionally, catalyzes the conversion of dihydroorotate to orotate with quinone as electron acceptor. In Bradyrhizobium diazoefficiens (strain JCM 10833 / BCRC 13528 / IAM 13628 / NBRC 14792 / USDA 110), this protein is Dihydroorotate dehydrogenase (quinone).